Consider the following 400-residue polypeptide: Hyaluronan and proteoglycan link protein 4 (400 aa).

An N-terminal signal peptide occupies residues methionine 1–alanine 30. Residues serine 47–glycine 155 form the Ig-like C2-type domain. Disulfide bonds link cysteine 69-cysteine 144, cysteine 186-cysteine 264, cysteine 210-cysteine 231, cysteine 291-cysteine 361, and cysteine 316-cysteine 337. An N-linked (GlcNAc...) asparagine glycan is attached at asparagine 133. 2 Link domains span residues valine 164–threonine 266 and glycine 271–arginine 363.

Belongs to the HAPLN family. Expressed predominantly in brain where it is found mainly throughout the midbrain and hindbrain in a perineuronal net pattern.

Its subcellular location is the secreted. It localises to the extracellular space. The protein resides in the extracellular matrix. Functionally, essential for the proper localization of brevican (BCAN), mainly as a perineuronal nets (PNNs)-type deposition in the brainstem and cerebellum thereby playing a key role in the formation and structural organization of PNNs. Contributes to the formation and transmission of inhibitory GABAergic synapses between Purkinje cells and deep cerebellar nuclei neurons. This chain is Hyaluronan and proteoglycan link protein 4 (Hapln4), found in Mus musculus (Mouse).